Consider the following 154-residue polypeptide: Large ribosomal subunit protein uL13 (154 aa).

Belongs to the universal ribosomal protein uL13 family. As to quaternary structure, part of the 50S ribosomal subunit.

In terms of biological role, this protein is one of the early assembly proteins of the 50S ribosomal subunit, although it is not seen to bind rRNA by itself. It is important during the early stages of 50S assembly. This is Large ribosomal subunit protein uL13 from Rhodospirillum rubrum (strain ATCC 11170 / ATH 1.1.1 / DSM 467 / LMG 4362 / NCIMB 8255 / S1).